The following is a 51-amino-acid chain: MSSIKPAAKKLRLAKAGKQNRRVPMFVIAKTGGKVRTHTKMRNWRRNTLKK.

It belongs to the eukaryotic ribosomal protein eL39 family.

This is Large ribosomal subunit protein eL39 from Methanococcus aeolicus (strain ATCC BAA-1280 / DSM 17508 / OCM 812 / Nankai-3).